We begin with the raw amino-acid sequence, 67 residues long: Large ribosomal subunit protein uL29 (67 aa).

Belongs to the universal ribosomal protein uL29 family.

The chain is Large ribosomal subunit protein uL29 from Ruminiclostridium cellulolyticum (strain ATCC 35319 / DSM 5812 / JCM 6584 / H10) (Clostridium cellulolyticum).